A 349-amino-acid polypeptide reads, in one-letter code: Protein-glutamate methylesterase/protein-glutamine glutaminase (349 aa).

One can recognise a Response regulatory domain in the interval 5 to 122 (KVLVVDDSAF…SLDLYKVKDE (118 aa)). At D56 the chain carries 4-aspartylphosphate. The region spanning 156–349 (ARPQQAIVAI…AAAIVQLIGE (194 aa)) is the CheB-type methylesterase domain. Catalysis depends on residues S168, H195, and D291.

Belongs to the CheB family. In terms of processing, phosphorylated by CheA. Phosphorylation of the N-terminal regulatory domain activates the methylesterase activity.

The protein localises to the cytoplasm. The enzyme catalyses [protein]-L-glutamate 5-O-methyl ester + H2O = L-glutamyl-[protein] + methanol + H(+). It carries out the reaction L-glutaminyl-[protein] + H2O = L-glutamyl-[protein] + NH4(+). In terms of biological role, involved in chemotaxis. Part of a chemotaxis signal transduction system that modulates chemotaxis in response to various stimuli. Catalyzes the demethylation of specific methylglutamate residues introduced into the chemoreceptors (methyl-accepting chemotaxis proteins or MCP) by CheR. Also mediates the irreversible deamidation of specific glutamine residues to glutamic acid. The chain is Protein-glutamate methylesterase/protein-glutamine glutaminase from Geobacillus kaustophilus (strain HTA426).